The sequence spans 137 residues: Protein Turandot X (137 aa).

An N-terminal signal peptide occupies residues M1–A24.

The protein belongs to the Turandot family.

It is found in the secreted. In terms of biological role, a humoral factor that may play a role in stress tolerance. The sequence is that of Protein Turandot X from Drosophila pseudoobscura pseudoobscura (Fruit fly).